A 647-amino-acid polypeptide reads, in one-letter code: Zinc finger CCCH domain-containing protein 19 (647 aa).

C3H1-type zinc fingers lie at residues 16 to 45 (RRRS…HSDA) and 47 to 73 (RMNP…HPPL). The disordered stretch occupies residues 78 to 106 (GAPTTPRTSQQSAPQVSVPAQAPVPNPAS). The span at 86-106 (SQQSAPQVSVPAQAPVPNPAS) shows a compositional bias: low complexity. Residues 109 to 136 (AKQGVPCYYFQKGMCVKGDRCAFLHLPQ) form a C3H1-type 3 zinc finger. Disordered stretches follow at residues 155-280 (VPHP…RTNG), 308-327 (LSES…DSSD), 335-452 (QRRL…DAES), 512-580 (LKRK…LSPA), and 586-605 (EAAD…ETAE). Composition is skewed to polar residues over residues 160 to 175 (LKNS…QQNA) and 189 to 203 (NGKT…NRAG). Basic and acidic residues predominate over residues 267 to 280 (SLREDRGAYRRTNG). Basic and acidic residues predominate over residues 347–359 (SDRHNVYPEDERH). Over residues 369 to 379 (QASNDGVSSSR) the composition is skewed to polar residues. The span at 419–433 (LRGKLHDRLKAKPNE) shows a compositional bias: basic and acidic residues. The segment covering 435–445 (VSGNVQSSLSK) has biased composition (polar residues). The segment covering 527–536 (GSKREEHSGG) has biased composition (basic and acidic residues).

The polypeptide is Zinc finger CCCH domain-containing protein 19 (Oryza sativa subsp. japonica (Rice)).